Consider the following 195-residue polypeptide: MDEKAAPGSETAIFAGGCFWGVQGVFQHVKGVSKAVSGYTGGAKDDAVYETVGTGRTGHAESVEITYDPSKVTYGQLLQVYFSVAHNPTQLNFQGPDSGTQYRSTIFAENDTQKQIAQSYIDQLDKAKLYPAPIVTTIETGKTFYPAENYHQDFLTLNPTYPYIVYNDLPKVANLKQLFPALYSEKPVLVLSASN.

Residue Cys-18 is part of the active site.

It belongs to the MsrA Met sulfoxide reductase family.

The enzyme catalyses L-methionyl-[protein] + [thioredoxin]-disulfide + H2O = L-methionyl-(S)-S-oxide-[protein] + [thioredoxin]-dithiol. The catalysed reaction is [thioredoxin]-disulfide + L-methionine + H2O = L-methionine (S)-S-oxide + [thioredoxin]-dithiol. In terms of biological role, has an important function as a repair enzyme for proteins that have been inactivated by oxidation. Catalyzes the reversible oxidation-reduction of methionine sulfoxide in proteins to methionine. The chain is Peptide methionine sulfoxide reductase MsrA 2 (msrA2) from Mesorhizobium japonicum (strain LMG 29417 / CECT 9101 / MAFF 303099) (Mesorhizobium loti (strain MAFF 303099)).